A 716-amino-acid polypeptide reads, in one-letter code: Leucine-rich repeat neuronal protein 1 (716 aa).

Positions 1-25 are cleaved as a signal peptide; it reads MARMSFVIAACQLVLGLLMTSLTES. The LRRNT domain occupies 26-72; it reads SIQNSECPQLCVCEIRPWFTPQSTYREATTVDCNDLRLTRIPSNLSS. At 26–631 the chain is on the extracellular side; that stretch reads SIQNSECPQL…DISDQETSTA (606 aa). LRR repeat units follow at residues 73-95, 96-117, 120-141, 144-165, 168-189, 192-213, 216-237, 240-261, 264-285, 313-335, and 338-359; these read DTQVLLLQSNNIAKTVDELQQLF, NLTELDFSQNNFTNIKEVGLAN, QLTTLHLEENQITEMTDYCLQD, NLQELYINHNQISTISAHAFAG, NLLRLHLNSNKLKVIDSRWFDS, NLEILMIGENPVIGILDMNFKP, NLRSLVLAGMYLTDIPGNALVG, SLESLSFYDNKLVKVPQLALQK, NLKFLDLNKNPIHKIQEGDFKN, ELTKLEATNNPKLSYIHRLAFRS, and ALESLMLNNNALNAIYQKTVES. N-linked (GlcNAc...) asparagine glycans are attached at residues asparagine 96 and asparagine 117. The region spanning 371 to 424 is the LRRCT domain; that stretch reads NPLRCDCVIHWINSNKTNIRFMEPLSMFCAMPPEYKGHQVKEVLIQDSSEQCLP. Asparagine 385 carries an N-linked (GlcNAc...) asparagine glycan. The region spanning 424–515 is the Ig-like C2-type domain; that stretch reads PMISHDSFPN…GADTRVATIK (92 aa). A disulfide bridge connects residues cysteine 447 and cysteine 499. Asparagine 517 is a glycosylation site (N-linked (GlcNAc...) asparagine). Positions 525 to 617 constitute a Fibronectin type-III domain; sequence QVLKIYVKQT…SCVNVTTKNA (93 aa). The helical transmembrane segment at 632 to 652 threads the bilayer; that stretch reads LAAVMGSMFAVISLASIAVYF. Residues 653 to 716 are Cytoplasmic-facing; the sequence is AKRFKRKNYH…VDTSRSYYMW (64 aa). Positions 691 to 700 are enriched in basic and acidic residues; it reads DSEKDKDGSA. The disordered stretch occupies residues 691–716; sequence DSEKDKDGSADTKPTQVDTSRSYYMW. Over residues 702–716 the composition is skewed to polar residues; that stretch reads TKPTQVDTSRSYYMW.

The protein localises to the membrane. The protein is Leucine-rich repeat neuronal protein 1 (LRRN1) of Homo sapiens (Human).